Reading from the N-terminus, the 105-residue chain is Small ribosomal subunit protein uS10 (105 aa).

The protein belongs to the universal ribosomal protein uS10 family. Part of the 30S ribosomal subunit.

Its function is as follows. Involved in the binding of tRNA to the ribosomes. In Rickettsia akari (strain Hartford), this protein is Small ribosomal subunit protein uS10.